The sequence spans 366 residues: Sigma54-dependent transcriptional activator SfnR (366 aa).

A Sigma-54 factor interaction domain is found at 21-250 (QVFEDPRSQA…LENVIHHSLL (230 aa)). ATP is bound by residues 49-56 (GETGTGKE) and 112-121 (ANGGTLFLDE).

Its function is as follows. Involved in the dimethyl sulfide degradation pathway. Activates the expression of sfnG and sfnF. In Pseudomonas putida (Arthrobacter siderocapsulatus), this protein is Sigma54-dependent transcriptional activator SfnR.